The following is a 260-amino-acid chain: Small ribosomal subunit protein uS2 (260 aa).

The protein belongs to the universal ribosomal protein uS2 family.

In Streptococcus sanguinis (strain SK36), this protein is Small ribosomal subunit protein uS2.